Reading from the N-terminus, the 155-residue chain is Ribosomal RNA large subunit methyltransferase H (155 aa).

S-adenosyl-L-methionine contacts are provided by residues Leu-72, Gly-103, and 122–127; that span reads LGRMVW.

It belongs to the RNA methyltransferase RlmH family. Homodimer.

It is found in the cytoplasm. It carries out the reaction pseudouridine(1915) in 23S rRNA + S-adenosyl-L-methionine = N(3)-methylpseudouridine(1915) in 23S rRNA + S-adenosyl-L-homocysteine + H(+). Functionally, specifically methylates the pseudouridine at position 1915 (m3Psi1915) in 23S rRNA. The polypeptide is Ribosomal RNA large subunit methyltransferase H (Cereibacter sphaeroides (strain ATCC 17029 / ATH 2.4.9) (Rhodobacter sphaeroides)).